The primary structure comprises 3948 residues: Hybrid PKS-NRPS synthetase ucsA (3948 aa).

Residues 11 to 440 enclose the Ketosynthase family 3 (KS3) domain; sequence NEPIAVIGSG…GTNAHAILER (430 aa). Catalysis depends on for beta-ketoacyl synthase activity residues C184, H323, and H363. A malonyl-CoA:ACP transacylase (MAT) domain region spans residues 548–881; it reads IFTGQGAQWP…FSTAIGQLWA (334 aa). The segment at 940–1079 is N-terminal hotdog fold; the sequence is HPLLGTLGAD…GHIRLTITDF (140 aa). A dehydratase (DH) domain region spans residues 940-1254; sequence HPLLGTLGAD…IRLIPFAAAS (315 aa). The 317-residue stretch at 940 to 1256 folds into the PKS/mFAS DH domain; the sequence is HPLLGTLGAD…LIPFAAASEA (317 aa). The active-site Proton acceptor; for dehydratase activity is the H972. The interval 1098 to 1256 is C-terminal hotdog fold; that stretch reads MTEVDQNLFY…LIPFAAASEA (159 aa). The Proton donor; for dehydratase activity role is filled by D1161. Residues 1299-1460 form a methyltransferase (MT) domain region; that stretch reads LAHVVGQITH…LRAGFTGVET (162 aa). The tract at residues 1989–2165 is ketoreductase (KR) domain; the sequence is TYILFGLAGA…ASVIDIGPIS (177 aa). Positions 2275-2357 constitute a Carrier 1 domain; that stretch reads DVARVLRHAI…GLVDFAVDNL (83 aa). At S2317 the chain carries O-(pantetheine 4'-phosphoryl)serine. Residues 2381–2404 are compositionally biased toward low complexity; sequence PKAKTDAPAAAPTPASATAPGSKS. Residues 2381–2473 are disordered; that stretch reads PKAKTDAPAA…SSQAASLESS (93 aa). 2 stretches are compositionally biased toward polar residues: residues 2405 to 2418 and 2426 to 2437; these read DGNV…ADQS and PQPTAILTNATA. The segment covering 2441–2456 has biased composition (low complexity); it reads PVSPSLSVTGSTSSAA. Residues 2462 to 2473 are compositionally biased toward polar residues; the sequence is PTSSQAASLESS. Positions 2489-2926 are condensation (C) domain; it reads EKTLPMSYGQ…PQIFNSSKVQ (438 aa). The tract at residues 2950-3355 is adenylation (A) (KR) domain; sequence DIAAVQPTLT…GEFVLQARIK (406 aa). The interval 3483-3507 is disordered; the sequence is PLTNKGGLKETPVARPTRYQNDPIP. The Carrier 2 domain occupies 3513–3592; it reads SSPFSSLDQV…QMASLLDGKD (80 aa). S3552 is modified (O-(pantetheine 4'-phosphoryl)serine). The reductase (R) domain stretch occupies residues 3633–3852; sequence LTGATGFLGL…QFVPVEDVAN (220 aa).

It in the C-terminal section; belongs to the NRP synthetase family.

The protein operates within mycotoxin biosynthesis. Hybrid PKS-NRPS synthetase; part of the gene cluster that mediates the biosynthesis of UCS1025A, a member of the pyrrolizidinone family that acts as a strong telomerase inhibitor and displays potent antibacterial and antitumor properties. These compounds share a hemiaminal-containing pyrrolizidinone core fused with a gamma-lactone, giving a furopyrrolizidine that is connected to a decalin fragment. The polyketide synthase module (PKS) of the PKS-NRPS ucsA is responsible for the synthesis of the polyketide backbone via the condensation of an acetyl-CoA starter unit with 6 malonyl-CoA units. The downstream nonribosomal peptide synthetase (NRPS) module then amidates the carboxyl end of the polyketide with a 2S,3S-methylproline derived from L-isoleucine by the 2-oxoglutarate-dependent dioxygenase ucsF which converts L-isoleucine to (4S,5S)-4-methylpyrroline-5-carboxylate that is further converted to 2S,3S-methylproline by the pyrroline-5-carboxylate reductase ucsG. Reductive release of the completed aminoacyl polyketide from the assembly line can form the 3-pyrrolin-2-one structure via an intramolecular Knoevenagel reaction. Because ucsA lacks a designated enoylreductase (ER) domain, the required activity is provided the enoyl reductase ucsL. This keto acyclic precursor is the substrate of the Diels-Alderase ucsH, that catalyzes the Diels-Alder cycloaddition. Oxidation of the 3S-methyl group to a carboxylate by the cytochrome P450 monooxygenase ucsK allows an oxa-Michael cyclization that might involve the reductase/dehydrogenase ucsI and which furnishes the furopyrrolizidine. The oxidase ucsJ likely plays a critical role in stereoselective reduction of the C5-C6 double bond to afford the required R-configured carboxylate group. Further enolization and oxidation at C5 by an unidentified enzyme affords the last intermediate that can undergo oxa-Michael cyclization to yield UCS1025A. The chain is Hybrid PKS-NRPS synthetase ucsA from Acremonium sp.